Here is a 1091-residue protein sequence, read N- to C-terminus: Exonuclease/helicase subunit RexB (1091 aa).

Belongs to the helicase family. AddB/RexB type 2 subfamily. In terms of assembly, heterodimer of RexA (AddA) and RexB. The cofactor is Mg(2+).

Involved in DNA double-strand break repair. Is not involved in recombination during natural competence or in plasmid establishment. In terms of biological role, the heterodimer acts as both an ATP-dependent DNA helicase and an ATP-dependent, dual-direction single-stranded exonuclease. Recognizes the chi site generating a DNA molecule suitable for the initiation of homologous recombination. This subunit has 5' -&gt; 3' nuclease activity but not helicase activity. This chain is Exonuclease/helicase subunit RexB, found in Streptococcus pneumoniae serotype 4 (strain ATCC BAA-334 / TIGR4).